We begin with the raw amino-acid sequence, 553 residues long: Dihydroxy-acid dehydratase (553 aa).

Asp78 provides a ligand contact to Mg(2+). A [2Fe-2S] cluster-binding site is contributed by Cys119. The Mg(2+) site is built by Asp120 and Lys121. Residue Lys121 is modified to N6-carboxylysine. Cys192 lines the [2Fe-2S] cluster pocket. Glu442 lines the Mg(2+) pocket. The active-site Proton acceptor is Ser468.

The protein belongs to the IlvD/Edd family. As to quaternary structure, homodimer. It depends on [2Fe-2S] cluster as a cofactor. Mg(2+) serves as cofactor.

The enzyme catalyses (2R)-2,3-dihydroxy-3-methylbutanoate = 3-methyl-2-oxobutanoate + H2O. The catalysed reaction is (2R,3R)-2,3-dihydroxy-3-methylpentanoate = (S)-3-methyl-2-oxopentanoate + H2O. The protein operates within amino-acid biosynthesis; L-isoleucine biosynthesis; L-isoleucine from 2-oxobutanoate: step 3/4. Its pathway is amino-acid biosynthesis; L-valine biosynthesis; L-valine from pyruvate: step 3/4. In terms of biological role, functions in the biosynthesis of branched-chain amino acids. Catalyzes the dehydration of (2R,3R)-2,3-dihydroxy-3-methylpentanoate (2,3-dihydroxy-3-methylvalerate) into 2-oxo-3-methylpentanoate (2-oxo-3-methylvalerate) and of (2R)-2,3-dihydroxy-3-methylbutanoate (2,3-dihydroxyisovalerate) into 2-oxo-3-methylbutanoate (2-oxoisovalerate), the penultimate precursor to L-isoleucine and L-valine, respectively. This Campylobacter hominis (strain ATCC BAA-381 / DSM 21671 / CCUG 45161 / LMG 19568 / NCTC 13146 / CH001A) protein is Dihydroxy-acid dehydratase.